Consider the following 419-residue polypeptide: Phosphoribosylamine--glycine ligase (419 aa).

Residues K109 to E311 enclose the ATP-grasp domain. A135–S191 lines the ATP pocket. Residues E281 and N283 each coordinate Mg(2+).

This sequence belongs to the GARS family. It depends on Mg(2+) as a cofactor. Requires Mn(2+) as cofactor.

It catalyses the reaction 5-phospho-beta-D-ribosylamine + glycine + ATP = N(1)-(5-phospho-beta-D-ribosyl)glycinamide + ADP + phosphate + H(+). The protein operates within purine metabolism; IMP biosynthesis via de novo pathway; N(1)-(5-phospho-D-ribosyl)glycinamide from 5-phospho-alpha-D-ribose 1-diphosphate: step 2/2. The protein is Phosphoribosylamine--glycine ligase of Synechocystis sp. (strain ATCC 27184 / PCC 6803 / Kazusa).